The chain runs to 227 residues: LysM and putative peptidoglycan-binding domain-containing protein 1 (227 aa).

The span at 1–11 (MASPSRQPPPG) shows a compositional bias: pro residues. The segment at 1 to 20 (MASPSRQPPPGGSGLLHGSR) is disordered. Phosphoserine occurs at positions 23 and 33. The LysM domain maps to 40 to 84 (LEHQLEPGDTLAGLALKYGVTMEQIKRANRLYTNDSIFLKKTLYI). A disordered region spans residues 95–150 (NGLDSEEEKDGEEEVRPSNDEVWPHSTERKKQETGAGRANGEVFPTPGQETPTPIH). Residues 98 to 107 (DSEEEKDGEE) show a composition bias toward acidic residues. Ser-99 bears the Phosphoserine mark. Basic and acidic residues predominate over residues 108 to 127 (EVRPSNDEVWPHSTERKKQE). A phosphoserine mark is found at Ser-166, Ser-181, Ser-194, and Ser-212. Residues 172–196 (AAQKLKKGESGVPGEDAGLHLSSPR) are disordered.

The protein is LysM and putative peptidoglycan-binding domain-containing protein 1 (LYSMD1) of Macaca fascicularis (Crab-eating macaque).